Consider the following 185-residue polypeptide: Putative lipoprotein LprB (185 aa).

The first 24 residues, 1 to 24, serve as a signal peptide directing secretion; the sequence is MRRKVRRLTLAVSALVALFPAVAG. The N-palmitoyl cysteine moiety is linked to residue C25. Residue C25 is the site of S-diacylglycerol cysteine attachment. Positions 26–50 are disordered; sequence SDSGDNKPGATIPSTPANAEGRHGP.

The protein localises to the cell membrane. The protein is Putative lipoprotein LprB (lprB) of Mycobacterium bovis (strain ATCC BAA-935 / AF2122/97).